Here is a 231-residue protein sequence, read N- to C-terminus: 2,3,4,5-tetrahydropyridine-2,6-dicarboxylate N-acetyltransferase (231 aa).

Belongs to the transferase hexapeptide repeat family. DapH subfamily.

It carries out the reaction (S)-2,3,4,5-tetrahydrodipicolinate + acetyl-CoA + H2O = L-2-acetamido-6-oxoheptanedioate + CoA. Its pathway is amino-acid biosynthesis; L-lysine biosynthesis via DAP pathway; LL-2,6-diaminopimelate from (S)-tetrahydrodipicolinate (acetylase route): step 1/3. Catalyzes the transfer of an acetyl group from acetyl-CoA to tetrahydrodipicolinate. The sequence is that of 2,3,4,5-tetrahydropyridine-2,6-dicarboxylate N-acetyltransferase from Thermosipho melanesiensis (strain DSM 12029 / CIP 104789 / BI429).